The primary structure comprises 194 residues: DPY30 domain-containing protein 2 (194 aa).

Residues 126-172 form a disordered region; sequence EAFEKEPLKQESLPGTSDMIPGMPQQSPSSEPSVSSQVDLNTGTPQE. Over residues 149–163 the composition is skewed to low complexity; sequence PQQSPSSEPSVSSQV.

The protein belongs to the dpy-30 family.

In Bos taurus (Bovine), this protein is DPY30 domain-containing protein 2 (DYDC2).